The following is a 532-amino-acid chain: Chaperonin GroEL 2 (532 aa).

ATP contacts are provided by residues 30 to 33 (TLGP), lysine 51, 87 to 91 (DGTTT), glycine 415, 479 to 481 (NAA), and aspartate 495.

The protein belongs to the chaperonin (HSP60) family. As to quaternary structure, forms a cylinder of 14 subunits composed of two heptameric rings stacked back-to-back. Interacts with the co-chaperonin GroES.

The protein localises to the cytoplasm. The enzyme catalyses ATP + H2O + a folded polypeptide = ADP + phosphate + an unfolded polypeptide.. In terms of biological role, together with its co-chaperonin GroES, plays an essential role in assisting protein folding. The GroEL-GroES system forms a nano-cage that allows encapsulation of the non-native substrate proteins and provides a physical environment optimized to promote and accelerate protein folding. The polypeptide is Chaperonin GroEL 2 (Vibrio parahaemolyticus serotype O3:K6 (strain RIMD 2210633)).